The primary structure comprises 331 residues: Anthranilate phosphoribosyltransferase (331 aa).

5-phospho-alpha-D-ribose 1-diphosphate-binding positions include Gly-79, 82–83 (GD), Thr-87, 89–92 (NIST), 107–115 (KHGNYGATS), and Ala-119. Gly-79 contacts anthranilate. Ser-91 lines the Mg(2+) pocket. Anthranilate is bound at residue Asn-110. Arg-165 contacts anthranilate. Residues Asp-223 and Glu-224 each coordinate Mg(2+).

The protein belongs to the anthranilate phosphoribosyltransferase family. Homodimer. It depends on Mg(2+) as a cofactor.

It catalyses the reaction N-(5-phospho-beta-D-ribosyl)anthranilate + diphosphate = 5-phospho-alpha-D-ribose 1-diphosphate + anthranilate. It participates in amino-acid biosynthesis; L-tryptophan biosynthesis; L-tryptophan from chorismate: step 2/5. Functionally, catalyzes the transfer of the phosphoribosyl group of 5-phosphorylribose-1-pyrophosphate (PRPP) to anthranilate to yield N-(5'-phosphoribosyl)-anthranilate (PRA). This chain is Anthranilate phosphoribosyltransferase, found in Bacteroides fragilis (strain ATCC 25285 / DSM 2151 / CCUG 4856 / JCM 11019 / LMG 10263 / NCTC 9343 / Onslow / VPI 2553 / EN-2).